The primary structure comprises 482 residues: Probable cytosol aminopeptidase (482 aa).

Lysine 251 and aspartate 256 together coordinate Mn(2+). Residue lysine 263 is part of the active site. Aspartate 274, aspartate 333, and glutamate 335 together coordinate Mn(2+). Residue arginine 337 is part of the active site.

It belongs to the peptidase M17 family. Mn(2+) is required as a cofactor.

It localises to the cytoplasm. The enzyme catalyses Release of an N-terminal amino acid, Xaa-|-Yaa-, in which Xaa is preferably Leu, but may be other amino acids including Pro although not Arg or Lys, and Yaa may be Pro. Amino acid amides and methyl esters are also readily hydrolyzed, but rates on arylamides are exceedingly low.. It catalyses the reaction Release of an N-terminal amino acid, preferentially leucine, but not glutamic or aspartic acids.. Its function is as follows. Presumably involved in the processing and regular turnover of intracellular proteins. Catalyzes the removal of unsubstituted N-terminal amino acids from various peptides. This chain is Probable cytosol aminopeptidase, found in Acinetobacter baumannii (strain AB307-0294).